Here is a 156-residue protein sequence, read N- to C-terminus: D-aminoacyl-tRNA deacylase (156 aa).

The short motif at G142–P143 is the Gly-cisPro motif, important for rejection of L-amino acids element.

It belongs to the DTD family. Homodimer.

It is found in the cytoplasm. The enzyme catalyses glycyl-tRNA(Ala) + H2O = tRNA(Ala) + glycine + H(+). It catalyses the reaction a D-aminoacyl-tRNA + H2O = a tRNA + a D-alpha-amino acid + H(+). Functionally, an aminoacyl-tRNA editing enzyme that deacylates mischarged D-aminoacyl-tRNAs. Also deacylates mischarged glycyl-tRNA(Ala), protecting cells against glycine mischarging by AlaRS. Acts via tRNA-based rather than protein-based catalysis; rejects L-amino acids rather than detecting D-amino acids in the active site. By recycling D-aminoacyl-tRNA to D-amino acids and free tRNA molecules, this enzyme counteracts the toxicity associated with the formation of D-aminoacyl-tRNA entities in vivo and helps enforce protein L-homochirality. This is D-aminoacyl-tRNA deacylase from Cupriavidus metallidurans (strain ATCC 43123 / DSM 2839 / NBRC 102507 / CH34) (Ralstonia metallidurans).